The following is a 167-amino-acid chain: 3-isopropylmalate dehydratase small subunit (167 aa).

Belongs to the LeuD family. LeuD type 2 subfamily. As to quaternary structure, heterodimer of LeuC and LeuD.

It carries out the reaction (2R,3S)-3-isopropylmalate = (2S)-2-isopropylmalate. It functions in the pathway amino-acid biosynthesis; L-leucine biosynthesis; L-leucine from 3-methyl-2-oxobutanoate: step 2/4. Its function is as follows. Catalyzes the isomerization between 2-isopropylmalate and 3-isopropylmalate, via the formation of 2-isopropylmaleate. The protein is 3-isopropylmalate dehydratase small subunit of Wolinella succinogenes (strain ATCC 29543 / DSM 1740 / CCUG 13145 / JCM 31913 / LMG 7466 / NCTC 11488 / FDC 602W) (Vibrio succinogenes).